A 611-amino-acid polypeptide reads, in one-letter code: Rho-related BTB domain-containing protein 3 (611 aa).

The rho-like stretch occupies residues 1–175 (MSIHIVALGN…KELGATYLEL (175 aa)). 2 BTB domains span residues 254–356 (VDVV…QWEE) and 420–487 (ADVV…CPAG). Residues 420-611 (ADVVFEIQGT…HSRKCRCLVM (192 aa)) form an interaction with Rab9 region.

Interacts with RAB9A and RAB9B (at lower level compared to RAB9A-binding). Interacts with M6PRBP1/TIP47. As to expression, ubiquitous. Highly expressed in neural and cardiac tissues, pancreas, placenta and testis.

The protein localises to the golgi apparatus. Its function is as follows. Rab9-regulated ATPase required for endosome to Golgi transport. Involved in transport vesicle docking at the Golgi complex, possibly by participating in release M6PRBP1/TIP47 from vesicles to permit their efficient docking and fusion at the Golgi. Specifically binds Rab9, but not other Rab proteins. Has low intrinsic ATPase activity due to autoinhibition, which is relieved by Rab9. This is Rho-related BTB domain-containing protein 3 (RHOBTB3) from Homo sapiens (Human).